The primary structure comprises 899 residues: Bifunctional uridylyltransferase/uridylyl-removing enzyme (899 aa).

The uridylyltransferase stretch occupies residues 1-342 (MPQMDPELFD…RAGESGPATP (342 aa)). Residues 343–705 (LNSRFQVRDG…TTQREFEGGT (363 aa)) form a uridylyl-removing region. In terms of domain architecture, HD spans 461–583 (VDAHTLNLIK…VGDQTHLDYL (123 aa)). 2 consecutive ACT domains span residues 706 to 784 (QIFI…DEYP) and 816 to 897 (ILEL…SLQI).

The protein belongs to the GlnD family. Requires Mg(2+) as cofactor.

It catalyses the reaction [protein-PII]-L-tyrosine + UTP = [protein-PII]-uridylyl-L-tyrosine + diphosphate. It carries out the reaction [protein-PII]-uridylyl-L-tyrosine + H2O = [protein-PII]-L-tyrosine + UMP + H(+). Its activity is regulated as follows. Uridylyltransferase (UTase) activity is inhibited by glutamine, while glutamine activates uridylyl-removing (UR) activity. Its function is as follows. Modifies, by uridylylation and deuridylylation, the PII regulatory proteins (GlnB and homologs), in response to the nitrogen status of the cell that GlnD senses through the glutamine level. Under low glutamine levels, catalyzes the conversion of the PII proteins and UTP to PII-UMP and PPi, while under higher glutamine levels, GlnD hydrolyzes PII-UMP to PII and UMP (deuridylylation). Thus, controls uridylylation state and activity of the PII proteins, and plays an important role in the regulation of nitrogen assimilation and metabolism. This is Bifunctional uridylyltransferase/uridylyl-removing enzyme from Ectopseudomonas mendocina (strain ymp) (Pseudomonas mendocina).